The chain runs to 360 residues: Phosphoserine aminotransferase (360 aa).

L-glutamate is bound at residue Arg-42. Pyridoxal 5'-phosphate-binding residues include Trp-102, Thr-152, Asp-171, and Gln-194. N6-(pyridoxal phosphate)lysine is present on Lys-195. 237 to 238 lines the pyridoxal 5'-phosphate pocket; it reads NT.

Belongs to the class-V pyridoxal-phosphate-dependent aminotransferase family. SerC subfamily. As to quaternary structure, homodimer. Pyridoxal 5'-phosphate is required as a cofactor.

It is found in the cytoplasm. The enzyme catalyses O-phospho-L-serine + 2-oxoglutarate = 3-phosphooxypyruvate + L-glutamate. It carries out the reaction 4-(phosphooxy)-L-threonine + 2-oxoglutarate = (R)-3-hydroxy-2-oxo-4-phosphooxybutanoate + L-glutamate. It participates in amino-acid biosynthesis; L-serine biosynthesis; L-serine from 3-phospho-D-glycerate: step 2/3. The protein operates within cofactor biosynthesis; pyridoxine 5'-phosphate biosynthesis; pyridoxine 5'-phosphate from D-erythrose 4-phosphate: step 3/5. In terms of biological role, catalyzes the reversible conversion of 3-phosphohydroxypyruvate to phosphoserine and of 3-hydroxy-2-oxo-4-phosphonooxybutanoate to phosphohydroxythreonine. The polypeptide is Phosphoserine aminotransferase (Coxiella burnetii (strain RSA 493 / Nine Mile phase I)).